We begin with the raw amino-acid sequence, 241 residues long: Phosphatidylcholine synthase (241 aa).

At 1-15 the chain is on the cytoplasmic side; sequence MKFFNYRRVPYAEIR. Residues 16 to 36 form a helical membrane-spanning segment; the sequence is AFSVHILTASGSFLAFLGVVA. The Periplasmic portion of the chain corresponds to 37-41; sequence AAEHR. The chain crosses the membrane as a helical span at residues 42–62; sequence FVDMFWWLGLALLVDGIDGPI. Residues 63 to 76 are Cytoplasmic-facing; sequence ARKVQVKEVLPNWS. A helical membrane pass occupies residues 77 to 97; sequence GDTLDNVIDYVTYVLLPAFAL. Residues 98 to 100 are Periplasmic-facing; it reads YQS. The helical transmembrane segment at 101 to 121 threads the bilayer; that stretch reads GMIGEPWSFVAAGAIVVSSAI. The Cytoplasmic portion of the chain corresponds to 122 to 133; it reads YYADMGMKTDEY. Residues 134 to 154 traverse the membrane as a helical segment; the sequence is FFSGFPVVWNMVVFTLFVIQA. Over 155-156 the chain is Periplasmic; it reads SE. Residues 157–177 traverse the membrane as a helical segment; sequence VTASIVVFLSVILTFLPINFL. Residues 178–187 lie on the Cytoplasmic side of the membrane; sequence HPVRVKRLRP. Residues 188-208 traverse the membrane as a helical segment; the sequence is LNLGIFLVWSVLGMYALLLHF. Residues 209 to 211 are Periplasmic-facing; that stretch reads ETP. Residues 212–232 form a helical membrane-spanning segment; it reads PWVVVGVVATGLYLYVIGFIL. Topologically, residues 233-241 are cytoplasmic; that stretch reads QIFPKLGRA.

It belongs to the CDP-alcohol phosphatidyltransferase class-I family. The cofactor is Mn(2+).

The protein localises to the cell inner membrane. The catalysed reaction is a CDP-1,2-diacyl-sn-glycerol + choline = a 1,2-diacyl-sn-glycero-3-phosphocholine + CMP + H(+). With respect to regulation, activated by CDP-diacylglycerol especially in the presence of Triton X-100 (0.1% w/v) at concentrations where micelles are formed. Maximal activation by Triton X-100 at 0.2% w/v, but higher concentrations become inhibitory. Inhibited by EDTA and high concentrations of choline. Its function is as follows. Condenses choline with CDP-diglyceride to produce phosphatidylcholine and CMP. This is Phosphatidylcholine synthase (pcs) from Rhizobium meliloti (strain 1021) (Ensifer meliloti).